The following is a 708-amino-acid chain: Ribosomal RNA large subunit methyltransferase K/L (708 aa).

Residues 43-154 enclose the THUMP domain; it reads QGYQITLWTR…RGKITIGINF (112 aa).

Belongs to the methyltransferase superfamily. RlmKL family.

It localises to the cytoplasm. The enzyme catalyses guanosine(2445) in 23S rRNA + S-adenosyl-L-methionine = N(2)-methylguanosine(2445) in 23S rRNA + S-adenosyl-L-homocysteine + H(+). The catalysed reaction is guanosine(2069) in 23S rRNA + S-adenosyl-L-methionine = N(2)-methylguanosine(2069) in 23S rRNA + S-adenosyl-L-homocysteine + H(+). Its function is as follows. Specifically methylates the guanine in position 2445 (m2G2445) and the guanine in position 2069 (m7G2069) of 23S rRNA. The polypeptide is Ribosomal RNA large subunit methyltransferase K/L (Shewanella amazonensis (strain ATCC BAA-1098 / SB2B)).